We begin with the raw amino-acid sequence, 531 residues long: High affinity cysteine transporter (531 aa).

The Cytoplasmic portion of the chain corresponds to 1 to 54; the sequence is MSKVDVKIGADSISSSDEILVPSRLADVTLAFMEENDAAVPEITPEQEKKLKRK. The helical transmembrane segment at 55–75 threads the bilayer; that stretch reads LFLTIFTFVSAINLLLYMDKA. The Lumenal portion of the chain corresponds to 76–97; the sequence is TLSYDSILGFFEDTGLTQNTYN. A helical transmembrane segment spans residues 98-118; sequence TVNTLFYVGFAIGQFPGQYLA. The Cytoplasmic segment spans residues 119-120; the sequence is QK. The chain crosses the membrane as a helical span at residues 121–141; that stretch reads LPLGKFLGGLLATWTILIFLS. The Lumenal segment spans residues 142–154; it reads CTAYNFSGVVALR. N-linked (GlcNAc...) asparagine glycosylation occurs at asparagine 146. A helical transmembrane segment spans residues 155 to 175; that stretch reads FFLGLTESVVIPILITTMGMF. Residues 176–186 are Cytoplasmic-facing; it reads FDASERAAAQP. The helical transmembrane segment at 187-207 threads the bilayer; it reads FFFAACMGSPIPTGFIAYGVL. Topologically, residues 208-218 are lumenal; sequence HITNPSISLWK. A helical transmembrane segment spans residues 219 to 239; that stretch reads IFTIIIGGLTFIMTVVVILWF. Residues 240–285 lie on the Cytoplasmic side of the membrane; sequence PNNPADVKFFSIQERVWIIRRVQASTGSSIEQKVFKKSQFREAMKD. Residues 286–306 traverse the membrane as a helical segment; sequence YITWLFGLFFLLQQLANNLPY. Over 307 to 324 the chain is Lumenal; it reads QQNLLFEGMGGVDALGST. Residues 325-345 traverse the membrane as a helical segment; that stretch reads LVSVAGAGFAVVCAFIATLML. The Cytoplasmic portion of the chain corresponds to 346–352; it reads AKWKNIS. Residues 353–373 form a helical membrane-spanning segment; that stretch reads ALTAIFWTLPALVGSIAAAAL. The Lumenal portion of the chain corresponds to 374-378; the sequence is PWDNK. The helical transmembrane segment at 379–399 threads the bilayer; it reads IGILANICMAGQIFGIPFIIA. At 400–413 the chain is on the cytoplasmic side; it reads LSWASSSASGYTKK. The chain crosses the membrane as a helical span at residues 414–436; that stretch reads LTRSSVSLFAMGIANIISPQIWR. Residues 437–447 are Lumenal-facing; it reads EKDSPRFLPAW. The helical transmembrane segment at 448 to 468 threads the bilayer; the sequence is IVQIVLSFSLAPAILLLIHFI. Residues 469–498 are a coiled coil; that stretch reads LKRRNNQRLKNYDENLQNYLDRIQLIESEN. The Cytoplasmic portion of the chain corresponds to 469–531; the sequence is LKRRNNQRLK…LENETFIYPL (63 aa). Serine 500 and serine 501 each carry phosphoserine.

Belongs to the major facilitator superfamily. Allantoate permease family.

The protein localises to the cell membrane. Its subcellular location is the endoplasmic reticulum membrane. In terms of biological role, high affinity cysteine-specific transporter. Major contributor to cysteine transport when cysteine, at low concentrations, is provided as the sole sulfur source. The polypeptide is High affinity cysteine transporter (YCT1) (Saccharomyces cerevisiae (strain ATCC 204508 / S288c) (Baker's yeast)).